Here is a 203-residue protein sequence, read N- to C-terminus: MSSVPIRTNFSLKGSSKLVSEFFEYAVNSILFQRGIYPAEDFKVVRKYGLNMLVSVDEEVKTYIRKIVSQLHKWMFAKKIQKLILVITSKCSGEDLERWQFNVEMVDTADQFQNIGNKEDELRVQKEIQALIRQITATVTFLPQLEEQCTFNVLVYADKDSEVPTDWVDSDPRILRDAEQVQLRSFSTSMHKIDCQVAYRVNP.

One can recognise an HORMA domain in the interval 13 to 197 (KGSSKLVSEF…TSMHKIDCQV (185 aa)).

Belongs to the MAD2 family. As to quaternary structure, interacts with mad3 and slp1.

The protein resides in the nucleus. Its function is as follows. Feedback control that prevents cells with incompletely assembled spindles from leaving mitosis. It interacts with the anaphase promoting complex/cyclosome (APC/C) thereby inhibiting APC/C-dependent proteolysis, a step required for exit from mitosis. The protein is Mitotic spindle checkpoint component mad2 of Schizosaccharomyces pombe (strain 972 / ATCC 24843) (Fission yeast).